We begin with the raw amino-acid sequence, 264 residues long: Phosphonoacetaldehyde hydrolase (264 aa).

The active-site Nucleophile is the aspartate 9. The Mg(2+) site is built by aspartate 9 and alanine 11. Catalysis depends on lysine 50, which acts as the Schiff-base intermediate with substrate. Aspartate 183 is a Mg(2+) binding site.

The protein belongs to the HAD-like hydrolase superfamily. PhnX family. In terms of assembly, homodimer. The cofactor is Mg(2+).

The enzyme catalyses phosphonoacetaldehyde + H2O = acetaldehyde + phosphate + H(+). In terms of biological role, involved in phosphonate degradation. This Bacillus cereus (strain ATCC 14579 / DSM 31 / CCUG 7414 / JCM 2152 / NBRC 15305 / NCIMB 9373 / NCTC 2599 / NRRL B-3711) protein is Phosphonoacetaldehyde hydrolase.